The following is a 152-amino-acid chain: Regulatory protein RecX (152 aa).

The protein belongs to the RecX family.

The protein localises to the cytoplasm. Modulates RecA activity. The polypeptide is Regulatory protein RecX (Chromobacterium violaceum (strain ATCC 12472 / DSM 30191 / JCM 1249 / CCUG 213 / NBRC 12614 / NCIMB 9131 / NCTC 9757 / MK)).